The chain runs to 461 residues: MTSLTLFDTMARRKRDFEPTDPGRVTMYVCGPTVYSYAHIGNARPAVVFDTLFRVLRRLYGEDQVIYARNITDVDDKIIETARESGKPIEDITSHYADIYRADMGALGVTLPTIEPHATDHIPEMIGMVQNLVYSGHAYEADGHVLFDVSSYEKYGRLSNRDLDDMIAGARVEVASYKRSPADFVLWKPAKDDEPGWDSPWGRGRPGWHLECSAMSEKHLGKTIDIHGGGTDLVFPHHENEIAQSVCAHKGAPMANYWLHNGFLTMGTDKMSKSLGNVQLVHDLIKDYPGEVLRYALLTAHYRAPLTWTADLLAKTRRSLDRIYGVLRRLGEIEAAPSDVPPAFLEALHDDLNTPKALSELFQLAGNANKALSDVEKAQAKGELLAAAGMLGLGQADPDAWFGLTDLDPAERARIDDLIVRRQTAREEKDWPTADAVRDELNALKVQVDDGPEGSTWRKLD.

Cys-30 lines the Zn(2+) pocket. The short motif at 32–42 (PTVYSYAHIGN) is the 'HIGH' region element. Zn(2+) contacts are provided by Cys-212, His-237, and Glu-241. Positions 270-274 (KMSKS) match the 'KMSKS' region motif. An ATP-binding site is contributed by Lys-273.

Belongs to the class-I aminoacyl-tRNA synthetase family. In terms of assembly, monomer. The cofactor is Zn(2+).

It localises to the cytoplasm. It catalyses the reaction tRNA(Cys) + L-cysteine + ATP = L-cysteinyl-tRNA(Cys) + AMP + diphosphate. This chain is Cysteine--tRNA ligase, found in Maricaulis maris (strain MCS10) (Caulobacter maris).